Here is an 817-residue protein sequence, read N- to C-terminus: Coiled-coil domain-containing protein 175 (817 aa).

2 coiled-coil regions span residues 130–166 (ILEI…ALGI) and 217–594 (LQDA…KQEE). Residues 761–817 (EEESPSSLSKEDLQKAGMKQKEEKTLRFSPSLHTRRDTLSRNCKMIKKRSRSPKNKP) form a disordered region. Residues 769–786 (SKEDLQKAGMKQKEEKTL) show a composition bias toward basic and acidic residues. The segment covering 804–817 (KMIKKRSRSPKNKP) has biased composition (basic residues).

The protein is Coiled-coil domain-containing protein 175 (Ccdc175) of Rattus norvegicus (Rat).